The chain runs to 438 residues: Aspartate--tRNA(Asp/Asn) ligase (438 aa).

Glutamate 176 is a binding site for L-aspartate. The interval 198–201 is aspartate; the sequence is QLYK. Arginine 220 is an L-aspartate binding site. ATP is bound by residues 220 to 222, 228 to 230, and glutamate 361; these read RAE and RHL. Positions 361 and 364 each coordinate Mg(2+). Residues serine 364 and arginine 368 each coordinate L-aspartate. 409–412 provides a ligand contact to ATP; the sequence is GIER.

This sequence belongs to the class-II aminoacyl-tRNA synthetase family. Type 2 subfamily. As to quaternary structure, homodimer. The cofactor is Mg(2+).

It is found in the cytoplasm. The catalysed reaction is tRNA(Asx) + L-aspartate + ATP = L-aspartyl-tRNA(Asx) + AMP + diphosphate. Aspartyl-tRNA synthetase with relaxed tRNA specificity since it is able to aspartylate not only its cognate tRNA(Asp) but also tRNA(Asn). Reaction proceeds in two steps: L-aspartate is first activated by ATP to form Asp-AMP and then transferred to the acceptor end of tRNA(Asp/Asn). The polypeptide is Aspartate--tRNA(Asp/Asn) ligase (Methanococcus aeolicus (strain ATCC BAA-1280 / DSM 17508 / OCM 812 / Nankai-3)).